We begin with the raw amino-acid sequence, 183 residues long: MGFSEWNLIWIDLEMTGLDPSRDRIIEIAVVVTDSNLDTLAEGPVLAIHQDRSLLDSMDEWNTRQHGRSGLTERVRASTVTEAEAEAQVLAFLKQYVPARTSPMCGNSICQDRRFLARWMPDLEAYFHYRHIDVSTLKELARRWSPEVAEGVRKSGNHLALDDIRDSIHELRHYRREFLRMPA.

Positions 8–171 constitute an Exonuclease domain; it reads LIWIDLEMTG…DDIRDSIHEL (164 aa). Residue Tyr129 is part of the active site.

This sequence belongs to the oligoribonuclease family.

It is found in the cytoplasm. In terms of biological role, 3'-to-5' exoribonuclease specific for small oligoribonucleotides. The protein is Oligoribonuclease of Halorhodospira halophila (strain DSM 244 / SL1) (Ectothiorhodospira halophila (strain DSM 244 / SL1)).